Reading from the N-terminus, the 216-residue chain is Probable nicotinate-nucleotide adenylyltransferase (216 aa).

This sequence belongs to the NadD family.

The catalysed reaction is nicotinate beta-D-ribonucleotide + ATP + H(+) = deamido-NAD(+) + diphosphate. It functions in the pathway cofactor biosynthesis; NAD(+) biosynthesis; deamido-NAD(+) from nicotinate D-ribonucleotide: step 1/1. Catalyzes the reversible adenylation of nicotinate mononucleotide (NaMN) to nicotinic acid adenine dinucleotide (NaAD). The polypeptide is Probable nicotinate-nucleotide adenylyltransferase (Geobacter sulfurreducens (strain ATCC 51573 / DSM 12127 / PCA)).